A 209-amino-acid chain; its full sequence is Ribonuclease HII (209 aa).

The RNase H type-2 domain occupies 18–209; that stretch reads GLVAGVDEVG…FKPVKALLER (192 aa). Residues Asp24, Glu25, and Asp116 each coordinate a divalent metal cation.

This sequence belongs to the RNase HII family. Mn(2+) serves as cofactor. Mg(2+) is required as a cofactor.

Its subcellular location is the cytoplasm. The catalysed reaction is Endonucleolytic cleavage to 5'-phosphomonoester.. Its function is as follows. Endonuclease that specifically degrades the RNA of RNA-DNA hybrids. This chain is Ribonuclease HII, found in Shewanella sp. (strain MR-7).